A 1460-amino-acid chain; its full sequence is Probable outer membrane protein PmpC (1460 aa).

The N-terminal stretch at Met1–Ala20 is a signal peptide. Disordered regions lie at residues Ser21–Ile48, Ser92–Asp212, Thr279–Ser372, Thr455–Ile549, and Val993–Ala1021. Positions Ser34–Ser44 are enriched in low complexity. A compositionally biased stretch (polar residues) spans Gln97 to Gly114. Residues Asn115–Glu137 are compositionally biased toward low complexity. The segment covering Gln138–Thr155 has biased composition (polar residues). Low complexity predominate over residues Asn290–Ser327. The span at Glu328–Ile358 shows a compositional bias: polar residues. The span at Leu461–Pro471 shows a compositional bias: low complexity. Residues Ser487–Ser501 show a composition bias toward polar residues. Low complexity-rich tracts occupy residues Ala504–Ser548 and Thr995–Thr1018. The Autotransporter domain maps to Asp1167–Phe1460.

It belongs to the PMP outer membrane protein family.

It localises to the secreted. It is found in the cell wall. The protein resides in the cell outer membrane. The chain is Probable outer membrane protein PmpC (pmpC) from Chlamydia muridarum (strain MoPn / Nigg).